The primary structure comprises 493 residues: 3-octaprenyl-4-hydroxybenzoate carboxy-lyase (493 aa).

Position 177 (N177) interacts with Mn(2+). Prenylated FMN contacts are provided by residues 180–182, 194–196, and 199–200; these read IYR, RWL, and RG. E243 contacts Mn(2+). The active-site Proton donor is the D292.

It belongs to the UbiD family. Homohexamer. Prenylated FMN is required as a cofactor. The cofactor is Mn(2+).

It localises to the cell membrane. It carries out the reaction a 4-hydroxy-3-(all-trans-polyprenyl)benzoate + H(+) = a 2-(all-trans-polyprenyl)phenol + CO2. It functions in the pathway cofactor biosynthesis; ubiquinone biosynthesis. Its function is as follows. Catalyzes the decarboxylation of 3-octaprenyl-4-hydroxy benzoate to 2-octaprenylphenol, an intermediate step in ubiquinone biosynthesis. The chain is 3-octaprenyl-4-hydroxybenzoate carboxy-lyase from Colwellia psychrerythraea (strain 34H / ATCC BAA-681) (Vibrio psychroerythus).